A 167-amino-acid polypeptide reads, in one-letter code: Phosphopantetheine adenylyltransferase (167 aa).

S11 provides a ligand contact to substrate. Residues 11 to 12 and H19 each bind ATP; that span reads SF. Substrate contacts are provided by K43, T76, and R90. Residues 91–93, E101, and 126–132 each bind ATP; these read GIR and YDALSST.

This sequence belongs to the bacterial CoaD family. In terms of assembly, homohexamer. Mg(2+) serves as cofactor.

It localises to the cytoplasm. The enzyme catalyses (R)-4'-phosphopantetheine + ATP + H(+) = 3'-dephospho-CoA + diphosphate. The protein operates within cofactor biosynthesis; coenzyme A biosynthesis; CoA from (R)-pantothenate: step 4/5. Functionally, reversibly transfers an adenylyl group from ATP to 4'-phosphopantetheine, yielding dephospho-CoA (dPCoA) and pyrophosphate. This is Phosphopantetheine adenylyltransferase from Lacticaseibacillus paracasei (strain ATCC 334 / BCRC 17002 / CCUG 31169 / CIP 107868 / KCTC 3260 / NRRL B-441) (Lactobacillus paracasei).